The sequence spans 166 residues: Ferric nitrobindin-like protein (166 aa).

Residues 21-27 (GHWEGEG) carry the GXWXGXG motif.

It belongs to the nitrobindin family.

The protein is Ferric nitrobindin-like protein of Cutibacterium acnes (strain DSM 16379 / KPA171202) (Propionibacterium acnes).